Reading from the N-terminus, the 397-residue chain is uncharacterized protein (397 aa).

Positions 8, 14, 17, and 95 each coordinate [4Fe-4S] cluster. S-adenosyl-L-methionine contacts are provided by Gln229, Tyr258, Glu279, and Asp325. The active-site Nucleophile is Cys352.

Belongs to the class I-like SAM-binding methyltransferase superfamily. RNA M5U methyltransferase family.

This is an uncharacterized protein from Chlamydia muridarum (strain MoPn / Nigg).